The primary structure comprises 158 residues: NAD(P)H-quinone oxidoreductase subunit J, chloroplastic (158 aa).

The protein belongs to the complex I 30 kDa subunit family. NDH is composed of at least 16 different subunits, 5 of which are encoded in the nucleus.

Its subcellular location is the plastid. The protein localises to the chloroplast thylakoid membrane. The enzyme catalyses a plastoquinone + NADH + (n+1) H(+)(in) = a plastoquinol + NAD(+) + n H(+)(out). It carries out the reaction a plastoquinone + NADPH + (n+1) H(+)(in) = a plastoquinol + NADP(+) + n H(+)(out). Its function is as follows. NDH shuttles electrons from NAD(P)H:plastoquinone, via FMN and iron-sulfur (Fe-S) centers, to quinones in the photosynthetic chain and possibly in a chloroplast respiratory chain. The immediate electron acceptor for the enzyme in this species is believed to be plastoquinone. Couples the redox reaction to proton translocation, and thus conserves the redox energy in a proton gradient. The protein is NAD(P)H-quinone oxidoreductase subunit J, chloroplastic of Solanum tuberosum (Potato).